A 344-amino-acid polypeptide reads, in one-letter code: MIELRNLSQRFPGPTGWVDALHNVNLTIPQGEVFGIIGRSGAGKSTLVRTINLLTRPTEGNVVVGGRDLTLLPAGALREARREIGMIFQHFNLLSSRTVFDNVALPLELAGAGRADIEAAVLPLLDLVGLSAQKDRYPAQISGGQKQRVGIARALASKPKVLLSDEATSALDPETTRSILDLLKRINRELGLTIVLITHQMEVIKQVCDRVAVLDAGRVVEEGRVIDVFLQPHHEVTRALIGDVIAQELPPALKARVAERLKTGSGHLLRLAFTGSGVDQPILSETIRRYELDFNILHGQIDEIQGQAFGSLAVLAGGEPGKVGQALAFLREQGVVVEELSYVE.

An ABC transporter domain is found at 2–241; sequence IELRNLSQRF…PHHEVTRALI (240 aa). 38–45 lines the ATP pocket; sequence GRSGAGKS.

It belongs to the ABC transporter superfamily. Methionine importer (TC 3.A.1.24) family. The complex is composed of two ATP-binding proteins (MetN), two transmembrane proteins (MetI) and a solute-binding protein (MetQ).

Its subcellular location is the cell inner membrane. The catalysed reaction is L-methionine(out) + ATP + H2O = L-methionine(in) + ADP + phosphate + H(+). It carries out the reaction D-methionine(out) + ATP + H2O = D-methionine(in) + ADP + phosphate + H(+). In terms of biological role, part of the ABC transporter complex MetNIQ involved in methionine import. Responsible for energy coupling to the transport system. In Burkholderia ambifaria (strain ATCC BAA-244 / DSM 16087 / CCUG 44356 / LMG 19182 / AMMD) (Burkholderia cepacia (strain AMMD)), this protein is Methionine import ATP-binding protein MetN 1.